The following is a 371-amino-acid chain: Thyroid transcription factor 1 (371 aa).

The segment at residues 161–220 (RRKRRVLFSQAQVYELERRFKQQKYLSAPEREHLASMIHLTPTQVKIWFQNHRYKMKRQA) is a DNA-binding region (homeobox). Disordered regions lie at residues 219-294 (QAKD…QQQA) and 308-342 (SGGPGLGAHPGHQPGSAGQSPDLAHHAASPAALQG). A compositionally biased stretch (gly residues) spans 233 to 243 (SGGGGGGGGAG). 2 stretches are compositionally biased toward low complexity: residues 244 to 253 (CPQQQQAQQQ) and 272 to 294 (AGAPAPGAGSLQGHAQQQAQQQA).

This sequence belongs to the NK-2 homeobox family. Phosphorylated on serine residues. Thyroid, lung and CNS.

The protein localises to the nucleus. Transcription factor that binds and activates the promoter of thyroid specific genes such as thyroglobulin, thyroperoxidase, and thyrotropin receptor. Crucial in the maintenance of the thyroid differentiation phenotype. May play a role in lung development and surfactant homeostasis. The protein is Thyroid transcription factor 1 (TITF1) of Canis lupus familiaris (Dog).